The sequence spans 438 residues: Transcriptional enhancer factor TEF-3 (438 aa).

The span at 1 to 18 (MTSEWSSPASPEGSNDSG) shows a compositional bias: polar residues. 2 disordered regions span residues 1-36 (MTSEWSSPASPEGSNDSGGSEALDKPIDNDAEGVWS) and 195-217 (QPSLPLPGFDSPTGLPPSSSTPA). A DNA-binding region (TEA) is located at residues 28-104 (DNDAEGVWSP…QVLARRKARE (77 aa)). A compositionally biased stretch (low complexity) spans 205 to 216 (SPTGLPPSSSTP).

Enriched in cardiac and skeletal muscle.

Its subcellular location is the nucleus. Its function is as follows. Transcription factor which plays a key role in the Hippo signaling pathway, a pathway involved in organ size control and tumor suppression by restricting proliferation and promoting apoptosis. The core of this pathway is composed of a kinase cascade wherein MST1/MST2, in complex with its regulatory protein SAV1, phosphorylates and activates LATS1/2 in complex with its regulatory protein MOB1, which in turn phosphorylates and inactivates YAP1 oncoprotein and WWTR1/TAZ. Binds m-cat elements from muscle-specific promoters and differentially activate transcription. Functionally, isoform B has probably a transactivation capacity that is lacking in the other isoforms. Isoform D may be defective in DNA binding. The polypeptide is Transcriptional enhancer factor TEF-3 (TEAD4) (Gallus gallus (Chicken)).